The primary structure comprises 212 residues: Ribonuclease HII (212 aa).

Positions 17 to 211 constitute an RNase H type-2 domain; sequence ANLAGIDEAG…VIEALLSLEQ (195 aa). Residues aspartate 23, glutamate 24, and aspartate 120 each coordinate a divalent metal cation.

Belongs to the RNase HII family. Mn(2+) is required as a cofactor. Requires Mg(2+) as cofactor.

It localises to the cytoplasm. It catalyses the reaction Endonucleolytic cleavage to 5'-phosphomonoester.. Endonuclease that specifically degrades the RNA of RNA-DNA hybrids. The protein is Ribonuclease HII of Chloroflexus aurantiacus (strain ATCC 29364 / DSM 637 / Y-400-fl).